Reading from the N-terminus, the 143-residue chain is 3-hydroxyacyl-[acyl-carrier-protein] dehydratase FabZ (143 aa).

Residue His49 is part of the active site.

Belongs to the thioester dehydratase family. FabZ subfamily.

The protein localises to the cytoplasm. It catalyses the reaction a (3R)-hydroxyacyl-[ACP] = a (2E)-enoyl-[ACP] + H2O. Its function is as follows. Involved in unsaturated fatty acids biosynthesis. Catalyzes the dehydration of short chain beta-hydroxyacyl-ACPs and long chain saturated and unsaturated beta-hydroxyacyl-ACPs. The protein is 3-hydroxyacyl-[acyl-carrier-protein] dehydratase FabZ of Wolbachia sp. subsp. Drosophila simulans (strain wRi).